The primary structure comprises 100 residues: Putative pterin-4-alpha-carbinolamine dehydratase (100 aa).

The protein belongs to the pterin-4-alpha-carbinolamine dehydratase family.

The enzyme catalyses (4aS,6R)-4a-hydroxy-L-erythro-5,6,7,8-tetrahydrobiopterin = (6R)-L-erythro-6,7-dihydrobiopterin + H2O. The sequence is that of Putative pterin-4-alpha-carbinolamine dehydratase from Afipia carboxidovorans (strain ATCC 49405 / DSM 1227 / KCTC 32145 / OM5) (Oligotropha carboxidovorans).